A 504-amino-acid polypeptide reads, in one-letter code: MEKFQGYLEFDGARQQSFLYPLFFREYIYVLAYDHGLNRLNRNRSIFVENSDYEKKYSSLIVKRLIWRMYEQNRLIIPTTDLHKNPVLGHTNHLYYQMISVLFAVIVEIPFSLSLGFSFEGKQIKKSYNLQSIHSLFPFLEDKLSHFNYVLDVLIPYPIHLEILVQTLRYRVKDASSLHFFRFCLYEYGNWKNFDIKKKCILNPRFFLFLYNSHICEYESIFFFLRKRSSHLRSIAYEVFFERILFYGKIHHFFKVFVNNFPATLGLLKDPFLHYVRYHGKNILATKDTPLLMNKWKFYFLNFWQCYFSVWFPSQKVNINQLSKDNLEFLGYLSSLRLNPLVVRSQMLENSFLIDNIRIKFDSKIPISSIIGSLAKDKFCNVLGHPISKATWTDSSDSDILNRFVRICRKISHYYSGSSKKKNLYRIKYILRLCCVKTLARKHKSTVRAFLKRLGSVLLEEFLTGEDQVLSLIFPRSYYASKRLYRVRIWYLDILYLHDLVNHE.

This sequence belongs to the intron maturase 2 family. MatK subfamily.

The protein localises to the plastid. It is found in the chloroplast. In terms of biological role, usually encoded in the trnK tRNA gene intron. Probably assists in splicing its own and other chloroplast group II introns. The polypeptide is Maturase K (Draba nemorosa (Woodland whitlowgrass)).